The sequence spans 261 residues: Oligodendrocyte transcription factor 1 (261 aa).

Residues 41 to 105 form a disordered region; it reads PPISSSSSTS…LRRKINSRER (65 aa). Positions 44-56 are enriched in low complexity; the sequence is SSSSSTSSSSTAS. The 60-residue stretch at 95-154 folds into the bHLH domain; sequence QLRRKINSRERKRMQDLNLAMDALREVILPYSAAHCQGAPGRKLSKIATLLLARNYILLL.

As to expression, expressed specifically in the brain, including the corpus callosum, hippocampal and cerebral white matter. Also detected in cells scattered in gray matter, most probably in oligodendrocytes.

Its subcellular location is the nucleus. In terms of biological role, promotes formation and maturation of oligodendrocytes, especially within the brain. Cooperates with OLIG2 to establish the pMN domain of the embryonic neural tube. In Rattus norvegicus (Rat), this protein is Oligodendrocyte transcription factor 1 (Olig1).